Here is a 158-residue protein sequence, read N- to C-terminus: MASKSSFMATFNIVTLMLMVASSTVTARPLMKPSMGTSSPTTSLVYRLKLDEDTGYCWDSLMQLQHCSGELILFFLNGETYIGPGCCSAIRTIGRKCWPTMIGVLGFTAQEGDMLQGYCDGNDSDNNGEDHALASSTLPLSVNFKTTVVRSSASPSNP.

A signal peptide spans 1–27; it reads MASKSSFMATFNIVTLMLMVASSTVTA. N-linked (GlcNAc...) asparagine glycosylation is present at Asn122.

This sequence belongs to the plant egg cell-secreted peptide family. Restricted to female reproductive tissues, specifically accumulating in storage vesicles of the unfertilized egg cell.

The protein resides in the cytoplasmic vesicle. Its subcellular location is the secreted. Functionally, involved in the regulation of gamete interactions during the double fertilization and to prevent multiple-pollen tube attraction; mediates the redistribution of the gamete fusogen HAP2/GCS1 to the cell surface after secretion upon sperm arrival. This Arabidopsis thaliana (Mouse-ear cress) protein is Egg cell-secreted protein 1.1 (EC1.1).